We begin with the raw amino-acid sequence, 527 residues long: Probable serine/threonine-protein kinase DDB_G0271538 (527 aa).

The span at 1–10 (MNINFSKDDI) shows a compositional bias: basic and acidic residues. Positions 1–24 (MNINFSKDDITGLPKSTKEEDEND) are disordered. The Protein kinase domain maps to 33–294 (LFMDVEIGRG…KIVVEGLKVL (262 aa)). ATP contacts are provided by residues 39-47 (IGRGSFGQV) and Lys-60. Asp-156 (proton acceptor) is an active-site residue. 3 disordered regions span residues 304-375 (VKGK…ISGS), 422-452 (FTPP…DDVP), and 485-527 (TALD…KKKL). Residues 313 to 324 (DPDEDSFIDPND) show a composition bias toward acidic residues. The span at 325-359 (DSNNNNNSENNNNNNDNSNENNENNNENNNNSNEN) shows a compositional bias: low complexity. Over residues 440-452 (VDEDEDEDEDDVP) the composition is skewed to acidic residues. The segment covering 512–527 (PKKKPNNKNKKKKKKL) has biased composition (basic residues).

Belongs to the protein kinase superfamily. TKL Ser/Thr protein kinase family.

The enzyme catalyses L-seryl-[protein] + ATP = O-phospho-L-seryl-[protein] + ADP + H(+). The catalysed reaction is L-threonyl-[protein] + ATP = O-phospho-L-threonyl-[protein] + ADP + H(+). In Dictyostelium discoideum (Social amoeba), this protein is Probable serine/threonine-protein kinase DDB_G0271538.